The sequence spans 181 residues: ATP-dependent protease subunit HslV (181 aa).

The active site involves threonine 5. Na(+) contacts are provided by alanine 161, cysteine 164, and threonine 167.

Belongs to the peptidase T1B family. HslV subfamily. A double ring-shaped homohexamer of HslV is capped on each side by a ring-shaped HslU homohexamer. The assembly of the HslU/HslV complex is dependent on binding of ATP.

Its subcellular location is the cytoplasm. It carries out the reaction ATP-dependent cleavage of peptide bonds with broad specificity.. Allosterically activated by HslU binding. In terms of biological role, protease subunit of a proteasome-like degradation complex believed to be a general protein degrading machinery. This is ATP-dependent protease subunit HslV from Sulfurimonas denitrificans (strain ATCC 33889 / DSM 1251) (Thiomicrospira denitrificans (strain ATCC 33889 / DSM 1251)).